Here is a 174-residue protein sequence, read N- to C-terminus: MRVFKDIVGYSHDELCSDAYPMTEINNGLIYEVQAKMVTIDLDVKVNTGANAASEETEEDEGVDNAGSKQVINVVDAMRLVETSFDKKSYTGYIKAYMKEVLAKLADNNPSRVDAFKKDAADFVKSVLGKFDEYKFYTGENMDADGHVALMYYKPGEVDPIFLYFKDGLESVKY.

Residues 1–174 (MRVFKDIVGY…FKDGLESVKY (174 aa)) form the TCTP domain.

Belongs to the TCTP family.

The protein localises to the cytoplasm. In terms of biological role, involved in calcium binding and microtubule stabilization. In Dictyostelium discoideum (Social amoeba), this protein is Translationally-controlled tumor protein homolog 1.